Here is a 300-residue protein sequence, read N- to C-terminus: 4-hydroxy-tetrahydrodipicolinate synthase (300 aa).

Pyruvate is bound at residue threonine 49. Tyrosine 137 (proton donor/acceptor) is an active-site residue. The Schiff-base intermediate with substrate role is filled by lysine 166. Isoleucine 208 contributes to the pyruvate binding site.

The protein belongs to the DapA family. Homotetramer; dimer of dimers.

The protein resides in the cytoplasm. The catalysed reaction is L-aspartate 4-semialdehyde + pyruvate = (2S,4S)-4-hydroxy-2,3,4,5-tetrahydrodipicolinate + H2O + H(+). It participates in amino-acid biosynthesis; L-lysine biosynthesis via DAP pathway; (S)-tetrahydrodipicolinate from L-aspartate: step 3/4. Catalyzes the condensation of (S)-aspartate-beta-semialdehyde [(S)-ASA] and pyruvate to 4-hydroxy-tetrahydrodipicolinate (HTPA). In Methanopyrus kandleri (strain AV19 / DSM 6324 / JCM 9639 / NBRC 100938), this protein is 4-hydroxy-tetrahydrodipicolinate synthase.